The sequence spans 155 residues: FHA domain-containing protein FhaB (155 aa).

The helical transmembrane segment at 6–28 threads the bilayer; that stretch reads LQLTRVGFLLLLWLFIWSVLRIL. Threonine 36 carries the phosphothreonine modification. An FHA domain is found at 83–132; the sequence is VLIGRADDSTLVLTDDYASTRHARLSPRGSEWYVEDLGSTNGTYLDRAKV.

In terms of processing, phosphorylated by PknB. Dephosphorylated by PstP.

The protein localises to the cell membrane. This Mycolicibacterium smegmatis (strain ATCC 700084 / mc(2)155) (Mycobacterium smegmatis) protein is FHA domain-containing protein FhaB (fhaB).